Reading from the N-terminus, the 797-residue chain is Probable exo-1,4-beta-xylosidase xlnD (797 aa).

Residues 1–20 (MPGAASIVAVLAALLPTALG) form the signal peptide. 4 N-linked (GlcNAc...) asparagine glycosylation sites follow: Asn-23, Asn-87, Asn-142, and Asn-237. Asp-310 is an active-site residue. Asn-326, Asn-391, Asn-404, Asn-442, Asn-479, Asn-521, Asn-617, Asn-644, Asn-657, Asn-684, and Asn-706 each carry an N-linked (GlcNAc...) asparagine glycan.

This sequence belongs to the glycosyl hydrolase 3 family.

Its subcellular location is the secreted. The enzyme catalyses Hydrolysis of (1-&gt;4)-beta-D-xylans, to remove successive D-xylose residues from the non-reducing termini.. It participates in glycan degradation; xylan degradation. In terms of biological role, xylan 1,4-beta-xylosidase involved in the hydrolysis of xylan, a major structural heterogeneous polysaccharide found in plant biomass representing the second most abundant polysaccharide in the biosphere, after cellulose. This Aspergillus flavus (strain ATCC 200026 / FGSC A1120 / IAM 13836 / NRRL 3357 / JCM 12722 / SRRC 167) protein is Probable exo-1,4-beta-xylosidase xlnD (xlnD).